A 72-amino-acid polypeptide reads, in one-letter code: Toxin Cll8 (72 aa).

Residues 1–4 form the signal peptide; sequence TVSA. The LCN-type CS-alpha/beta domain occupies 5-70; the sequence is KEGYLVKKSN…TWPLPNKSCG (66 aa). 4 disulfides stabilise this stretch: cysteine 16-cysteine 69, cysteine 20-cysteine 45, cysteine 29-cysteine 50, and cysteine 33-cysteine 52. Cysteine 69 carries the post-translational modification Cysteine amide.

The protein belongs to the long (4 C-C) scorpion toxin superfamily. Sodium channel inhibitor family. Beta subfamily. As to expression, expressed by the venom gland.

The protein localises to the secreted. Beta toxins bind voltage-independently at site-4 of sodium channels (Nav) and shift the voltage of activation toward more negative potentials thereby affecting sodium channel activation and promoting spontaneous and repetitive firing. This chain is Toxin Cll8, found in Centruroides limpidus (Mexican scorpion).